Reading from the N-terminus, the 522-residue chain is Zinc finger protein 329 (522 aa).

Ser30 is subject to Phosphoserine. 12 consecutive C2H2-type zinc fingers follow at residues 184–206 (YKCA…HRTH), 212–234 (YTCN…RRIH), 240–262 (YKCS…QRIH), 268–290 (YACL…QRTH), 296–318 (YRCN…LRIH), 324–346 (YECS…ERTH), 352–374 (FECV…QKIH), 380–402 (YECK…QRVH), 408–430 (YGCN…QRIH), 436–458 (YECN…QRIH), 464–486 (YQCL…QRLH), and 492–514 (SQCP…QRTH).

Belongs to the krueppel C2H2-type zinc-finger protein family.

Its subcellular location is the nucleus. May be involved in transcriptional regulation. The sequence is that of Zinc finger protein 329 (Znf329) from Mus musculus (Mouse).